We begin with the raw amino-acid sequence, 334 residues long: Ethanol acetyltransferase 1 (334 aa).

The transit peptide at 1-16 directs the protein to the mitochondrion; that stretch reads MFASNVVVLNKRSIRF. Active-site charge relay system residues include Ser124, Asp148, and His296.

The protein belongs to the AB hydrolase superfamily.

It localises to the mitochondrion. It carries out the reaction ethanol + acetyl-CoA = ethyl acetate + CoA. The catalysed reaction is acetyl-CoA + H2O = acetate + CoA + H(+). The enzyme catalyses ethyl acetate + H2O = ethanol + acetate + H(+). Functionally, alcohol acetyltransferase that catalyzes the synthesis of ethyl acetate from ethanol and acetyl-CoA. Can also function as a thioesterase by hydrolyzing acetyl-CoA in the absence of ethanol, as well as esterase hydrolyzing ethyl acetate. The protein is Ethanol acetyltransferase 1 (EAT1) of Hanseniaspora uvarum (Yeast).